Reading from the N-terminus, the 146-residue chain is 3-dehydroquinate dehydratase (146 aa).

Y23 (proton acceptor) is an active-site residue. Substrate is bound by residues N74, H80, and D87. H100 serves as the catalytic Proton donor. Residues 101-102 (IS) and R111 each bind substrate.

Belongs to the type-II 3-dehydroquinase family. As to quaternary structure, homododecamer.

The catalysed reaction is 3-dehydroquinate = 3-dehydroshikimate + H2O. It participates in metabolic intermediate biosynthesis; chorismate biosynthesis; chorismate from D-erythrose 4-phosphate and phosphoenolpyruvate: step 3/7. Functionally, catalyzes a trans-dehydration via an enolate intermediate. In Bacillus cytotoxicus (strain DSM 22905 / CIP 110041 / 391-98 / NVH 391-98), this protein is 3-dehydroquinate dehydratase.